The sequence spans 367 residues: Glutamate 5-kinase (367 aa).

Lysine 10 lines the ATP pocket. Substrate-binding residues include serine 50, aspartate 137, and asparagine 149. Residues 169-170 (TD) and 211-217 (TGGMATK) each bind ATP. A PUA domain is found at 275 to 353 (AGEITVDDGA…QQISEILGYE (79 aa)).

Belongs to the glutamate 5-kinase family.

It localises to the cytoplasm. The enzyme catalyses L-glutamate + ATP = L-glutamyl 5-phosphate + ADP. It functions in the pathway amino-acid biosynthesis; L-proline biosynthesis; L-glutamate 5-semialdehyde from L-glutamate: step 1/2. Its function is as follows. Catalyzes the transfer of a phosphate group to glutamate to form L-glutamate 5-phosphate. This is Glutamate 5-kinase from Yersinia enterocolitica serotype O:8 / biotype 1B (strain NCTC 13174 / 8081).